Consider the following 510-residue polypeptide: tRNA-2-methylthio-N(6)-dimethylallyladenosine synthase (510 aa).

One can recognise an MTTase N-terminal domain in the interval 19–135; it reads RTFEVRTYGC…LPALLDRARH (117 aa). [4Fe-4S] cluster contacts are provided by cysteine 28, cysteine 64, cysteine 98, cysteine 172, cysteine 176, and cysteine 179. The 237-residue stretch at 158–394 folds into the Radical SAM core domain; it reads RESSYAAWVS…IELQERISLE (237 aa). A TRAM domain is found at 397-467; sequence TAQIGRRVEL…PHHLIADAGL (71 aa). Residues 477 to 510 are disordered; sequence DAHAAGQKPRTGVGLGMPAVGAPDPLPATTGCAR.

It belongs to the methylthiotransferase family. MiaB subfamily. As to quaternary structure, monomer. [4Fe-4S] cluster serves as cofactor.

Its subcellular location is the cytoplasm. The enzyme catalyses N(6)-dimethylallyladenosine(37) in tRNA + (sulfur carrier)-SH + AH2 + 2 S-adenosyl-L-methionine = 2-methylsulfanyl-N(6)-dimethylallyladenosine(37) in tRNA + (sulfur carrier)-H + 5'-deoxyadenosine + L-methionine + A + S-adenosyl-L-homocysteine + 2 H(+). Its function is as follows. Catalyzes the methylthiolation of N6-(dimethylallyl)adenosine (i(6)A), leading to the formation of 2-methylthio-N6-(dimethylallyl)adenosine (ms(2)i(6)A) at position 37 in tRNAs that read codons beginning with uridine. The sequence is that of tRNA-2-methylthio-N(6)-dimethylallyladenosine synthase from Mycolicibacterium vanbaalenii (strain DSM 7251 / JCM 13017 / BCRC 16820 / KCTC 9966 / NRRL B-24157 / PYR-1) (Mycobacterium vanbaalenii).